The following is a 707-amino-acid chain: Nucleolin (707 aa).

The tract at residues 1-308 (MVKLAKAGKT…KVEGSEPTTP (308 aa)) is disordered. 3 positions are modified to N6-acetyllysine: K9, K15, and K16. Positions 24–46 (VEEDSEDEEMSEDEDDSSGEEEV) are enriched in acidic residues. Phosphoserine is present on residues S28, S34, S40, and S41. Residues 56 to 92 (ATTTPAKKVVVSQTKKAAVPTPAKKAAVTPGKKAVAT) are compositionally biased toward low complexity. The stretch at 58 to 65 (TTPAKKVV) is repeat 1. Positions 58-135 (TTPAKKVVVS…GAATPAKGAK (78 aa)) are 8 X 8 AA tandem repeats of X-T-P-X-K-K-X-X. A Phosphoserine modification is found at S67. Phosphothreonine occurs at positions 69, 76, 84, and 92. 3 repeat units span residues 75 to 82 (PTPAKKAA), 83 to 90 (VTPGKKAV), and 91 to 98 (ATPAKKNI). An N6-acetyllysine modification is found at K96. T99 is modified (phosphothreonine). The stretch at 99–104 (TPAKVI) is one 5; truncated repeat. Position 102 is an N6-acetyllysine (K102). The stretch at 105-112 (PTPGKKGA) is repeat 6. T106 bears the Phosphothreonine mark. N6-acetyllysine is present on residues K109 and K116. 2 tandem repeats follow at residues 120-127 (PTPGKKGA) and 128-135 (ATPAKGAK). T121 is modified (phosphothreonine). Low complexity predominate over residues 121–137 (TPGKKGAATPAKGAKNG). K124 carries the N6-acetyllysine modification. Phosphoserine occurs at positions 145 and 157. Positions 145-170 (SDEDEDEEDEDDSDEDEDDEEEDEFE) are enriched in acidic residues. Over residues 179-188 (PAKAAPAAPA) the composition is skewed to low complexity. Phosphoserine is present on residues S189 and S212. Over residues 189–217 (SEDEEDDEDEDDEEDDDEEEEDDSEEEVM) the composition is skewed to acidic residues. At T220 the chain carries Phosphothreonine. A compositionally biased stretch (acidic residues) spans 241 to 273 (EEEDDEEEDEDDEDEDDEEEDDEDDDEEEEEEE). Residues 286–302 (MTKQKEAPEAKKQKVEG) show a composition bias toward basic and acidic residues. A Glycyl lysine isopeptide (Lys-Gly) (interchain with G-Cter in SUMO1); alternate cross-link involves residue K299. A Glycyl lysine isopeptide (Lys-Gly) (interchain with G-Cter in SUMO2); alternate cross-link involves residue K299. Position 303 is a phosphoserine (S303). RRM domains lie at 309–385 (FNLF…KPKG) and 395–468 (RTLL…YTGE). Residue K320 is modified to N6-acetyllysine. K326 is covalently cross-linked (Glycyl lysine isopeptide (Lys-Gly) (interchain with G-Cter in SUMO1); alternate). A Glycyl lysine isopeptide (Lys-Gly) (interchain with G-Cter in SUMO2); alternate cross-link involves residue K326. The residue at position 350 (K350) is an N6-acetyllysine. S358 carries the phosphoserine modification. At T369 the chain carries Phosphothreonine. A Glycyl lysine isopeptide (Lys-Gly) (interchain with G-Cter in SUMO2) cross-link involves residue K372. K379 participates in a covalent cross-link: Glycyl lysine isopeptide (Lys-Gly) (interchain with G-Cter in SUMO2); alternate. K379 bears the N6-acetyllysine; alternate mark. Position 400 is an N6-acetyllysine (K400). At S403 the chain carries Phosphoserine. The residue at position 407 (T407) is a Phosphothreonine. Residues K429 and K446 each carry the N6-acetyllysine modification. A phosphoserine mark is found at S460 and S462. K469 and K478 each carry N6-acetyllysine. 2 consecutive RRM domains span residues 487–561 (KTLV…LQGS) and 569–644 (KTLF…WAKP). K514 participates in a covalent cross-link: Glycyl lysine isopeptide (Lys-Gly) (interchain with G-Cter in SUMO2); alternate. K514 is modified (N6-acetyllysine; alternate). N6-acetyllysine is present on residues K522 and K569. A Glycyl lysine isopeptide (Lys-Gly) (interchain with G-Cter in SUMO2); alternate cross-link involves residue K574. K574 is modified (N6-acetyllysine; alternate). Phosphoserine is present on S577. A Glycyl lysine isopeptide (Lys-Gly) (interchain with G-Cter in SUMO1); alternate cross-link involves residue K586. K586 is covalently cross-linked (Glycyl lysine isopeptide (Lys-Gly) (interchain with G-Cter in SUMO2); alternate). A phosphoserine mark is found at S588 and S616. K621 participates in a covalent cross-link: Glycyl lysine isopeptide (Lys-Gly) (interchain with G-Cter in SUMO2). A disordered region spans residues 639 to 707 (LDWAKPKGEG…KPQGKKTKFE (69 aa)). K643 carries the N6-acetyllysine modification. The span at 647 to 696 (EGGFGGRGGGRGGFGGRGGGRGGRGGFGGRGRGGFGGRGGFRGGRGGGGD) shows a compositional bias: gly residues. Residues R653, R657, R663, R667, R670, R676, R678, R684, and R688 each carry the asymmetric dimethylarginine modification. At R691 the chain carries Asymmetric dimethylarginine; alternate. R691 carries the post-translational modification Omega-N-methylarginine; alternate.

In terms of assembly, identified in a IGF2BP1-dependent mRNP granule complex containing untranslated mRNAs. Component of the SWAP complex that consists of NPM1, NCL/nucleolin, PARP1 and SWAP70. Component of a complex which is at least composed of HTATSF1/Tat-SF1, the P-TEFb complex components CDK9 and CCNT1, RNA polymerase II, SUPT5H, and NCL/nucleolin. Interacts with AICDA. Interacts with APTX. Interacts with C1QBP. Interacts with ERBB4. Interacts (via C-terminus) with FMR1 isoform 6 (via N-terminus). Interacts with GZF1; this interaction is important for nucleolar localization of GZF1. Interacts with NSUN2. Interacts with NVL. Interacts (via N-terminus domain) with SETX. Interacts (via RRM1 and C-terminal RRM4/Arg/Gly-rich domains) with TERT; the interaction is important for nucleolar localization of TERT. Interacts with WDR46. Interacts with ZFP36. Interacts with LRRC34. Interacts with RRP1B. Interacts with HNRNPU; this interaction occurs during mitosis. Interacts with RIOK1; RIOK1 recruits NCL to PRMT5 for symmetrically methylation. Interacts with ZBTB7B. Interacts with MDK; this interaction promotes NCL clustering and lateral movements of this complex into lipid rafts leading to MDK internalization. Interacts with HDGF. Interacts with ALKBH2. Interacts with IGFBP5; this interaction is necessary for IGFBP5 localization to the nucleus. Interacts with DDX24 (when ubiquitinated); this interaction may be important during ribosome biogenesis. In terms of processing, some glutamate residues are glycylated by TTLL8. This modification occurs exclusively on glutamate residues and results in a glycine chain on the gamma-carboxyl group. Post-translationally, symmetrically methylated by PRMT5. Expressed in B-cells that have been induced to switch to various Ig isotypes.

The protein localises to the nucleus. It localises to the nucleolus. It is found in the cytoplasm. Functionally, nucleolin is the major nucleolar protein of growing eukaryotic cells. It is found associated with intranucleolar chromatin and pre-ribosomal particles. It induces chromatin decondensation by binding to histone H1. It is thought to play a role in pre-rRNA transcription and ribosome assembly. May play a role in the process of transcriptional elongation. Binds RNA oligonucleotides with 5'-UUAGGG-3' repeats more tightly than the telomeric single-stranded DNA 5'-TTAGGG-3' repeats. This Mus musculus (Mouse) protein is Nucleolin (Ncl).